The following is a 126-amino-acid chain: Aspartate 1-decarboxylase (126 aa).

The active-site Schiff-base intermediate with substrate; via pyruvic acid is serine 25. Position 25 is a pyruvic acid (Ser) (serine 25). Threonine 57 lines the substrate pocket. Catalysis depends on tyrosine 58, which acts as the Proton donor. Residue 73-75 coordinates substrate; that stretch reads GAA.

This sequence belongs to the PanD family. In terms of assembly, heterooctamer of four alpha and four beta subunits. The cofactor is pyruvate. Is synthesized initially as an inactive proenzyme, which is activated by self-cleavage at a specific serine bond to produce a beta-subunit with a hydroxyl group at its C-terminus and an alpha-subunit with a pyruvoyl group at its N-terminus.

Its subcellular location is the cytoplasm. It carries out the reaction L-aspartate + H(+) = beta-alanine + CO2. The protein operates within cofactor biosynthesis; (R)-pantothenate biosynthesis; beta-alanine from L-aspartate: step 1/1. Functionally, catalyzes the pyruvoyl-dependent decarboxylation of aspartate to produce beta-alanine. The polypeptide is Aspartate 1-decarboxylase (Serratia proteamaculans (strain 568)).